We begin with the raw amino-acid sequence, 596 residues long: MLASAGLLQTSLIWVAYAVAVALVLLVAIITTFTWQSPHERSVTVSIVAIVSLTSLLATVFLLPVDIALVSSTASAHLGAKKDWATPERIDGILLTLKVVYYTLYSFDALLCLIVIPFAYFWYEEYDEVEEEEGTSGAGARFWKAAKYTLGFVFLVLILFLLGFFVPAAGSGNGKHLDLDYFKRLLAANKGEKALTFGVGLLITLGTFLYTLYTGAGLALLPVSLIKSAPSISAPQLSATIATDLEHNRELQRQIEMRNAGRPDGISQKDRRELDALLREERTLVRRERLAAETRGDGRSGVFRAWTKIQAVFRPLKLLGGILLLLLSILVWASMLITGIDKAANSICKEHCGYILGHINVFQPVNWIFVQSAKAFPVDYILMALLVLFFFGSSITGIATIGIRFLWVRVFQIKKGRTSPQALLIATVMLALIILAINYAIAMIVAPQYAIYGTQTFCVNAPRHPGEQPDCREHRDMVRPCSEVFSEPAAKDVCTPTVMSTFLNRVTINWPVFGAIDFWAQFAFLGVFMVVFVTSLFRTPRLNLSELDEEAEVDEEEGLLASTGRRFGATWGDITGRAKNRNGYGTGGGEGSNGRG.

10 helical membrane-spanning segments follow: residues 13 to 33 (IWVA…ITTF), 45 to 65 (VSIV…LLPV), 99 to 119 (VVYY…IPFA), 150 to 170 (LGFV…PAAG), 201 to 221 (LLIT…LALL), 318 to 338 (LLGG…MLIT), 353 to 373 (GYIL…VQSA), 381 to 401 (ILMA…IATI), 425 to 445 (IATV…AMIV), and 512 to 532 (VFGA…MVVF). Residue Asn543 is glycosylated (N-linked (GlcNAc...) asparagine). A disordered region spans residues 576–596 (GRAKNRNGYGTGGGEGSNGRG). The span at 584 to 596 (YGTGGGEGSNGRG) shows a compositional bias: gly residues.

The protein belongs to the LIMR family. LMBRD1 subfamily.

The protein localises to the lysosome membrane. Its function is as follows. Probable lysosomal cobalamin transporter. Required to export cobalamin from lysosomes allowing its conversion to cofactors. The protein is Probable lysosomal cobalamin transporter of Podospora anserina (strain S / ATCC MYA-4624 / DSM 980 / FGSC 10383) (Pleurage anserina).